We begin with the raw amino-acid sequence, 376 residues long: Chaperone protein DnaJ (376 aa).

The region spanning 4 to 68 (DYYDILGVDR…DTRSRYDQFG (65 aa)) is the J domain. The CR-type zinc finger occupies 135-217 (GGEKEIRIPH…CNGAGRRQVT (83 aa)). Zn(2+) is bound by residues cysteine 148, cysteine 151, cysteine 165, cysteine 168, cysteine 191, cysteine 194, cysteine 205, and cysteine 208. CXXCXGXG motif repeat units follow at residues 148-155 (CQVCKGDG), 165-172 (CSTCNGQG), 191-198 (CPACNGQG), and 205-212 (CEVCNGAG).

It belongs to the DnaJ family. In terms of assembly, homodimer. The cofactor is Zn(2+).

The protein resides in the cytoplasm. In terms of biological role, participates actively in the response to hyperosmotic and heat shock by preventing the aggregation of stress-denatured proteins and by disaggregating proteins, also in an autonomous, DnaK-independent fashion. Unfolded proteins bind initially to DnaJ; upon interaction with the DnaJ-bound protein, DnaK hydrolyzes its bound ATP, resulting in the formation of a stable complex. GrpE releases ADP from DnaK; ATP binding to DnaK triggers the release of the substrate protein, thus completing the reaction cycle. Several rounds of ATP-dependent interactions between DnaJ, DnaK and GrpE are required for fully efficient folding. Also involved, together with DnaK and GrpE, in the DNA replication of plasmids through activation of initiation proteins. The chain is Chaperone protein DnaJ from Crocosphaera subtropica (strain ATCC 51142 / BH68) (Cyanothece sp. (strain ATCC 51142)).